Here is a 212-residue protein sequence, read N- to C-terminus: Dephospho-CoA kinase (212 aa).

One can recognise a DPCK domain in the interval 6-211; the sequence is RLGLTGGIGS…LSCQPLSPNQ (206 aa). Position 14 to 19 (14 to 19) interacts with ATP; that stretch reads GSGKST.

This sequence belongs to the CoaE family.

It localises to the cytoplasm. The catalysed reaction is 3'-dephospho-CoA + ATP = ADP + CoA + H(+). Its pathway is cofactor biosynthesis; coenzyme A biosynthesis; CoA from (R)-pantothenate: step 5/5. Functionally, catalyzes the phosphorylation of the 3'-hydroxyl group of dephosphocoenzyme A to form coenzyme A. This chain is Dephospho-CoA kinase, found in Albidiferax ferrireducens (strain ATCC BAA-621 / DSM 15236 / T118) (Rhodoferax ferrireducens).